The following is a 213-amino-acid chain: Transmembrane protein 186 (213 aa).

The Mitochondrial matrix portion of the chain corresponds to 1–79 (MAALLRAVRR…FLSRLKLAQT (79 aa)). Residues 80–100 (ALTVVALPPGYYLYSQGLLTL) traverse the membrane as a helical segment. Residues 101-102 (NT) are Mitochondrial intermembrane-facing. A helical membrane pass occupies residues 103–123 (VCLMSGISGFALTMLCWMSYF). Residues 124-213 (LRRLVGILYL…QVFGVHQMLK (90 aa)) lie on the Mitochondrial matrix side of the membrane.

It belongs to the TMEM186 family. As to quaternary structure, part of the mitochondrial complex I assembly/MCIA complex that comprises at least the core subunits TMEM126B, NDUFAF1, ECSIT and ACAD9 and complement subunits such as COA1 and TMEM186. Interacts with MT-ND3.

Its subcellular location is the mitochondrion inner membrane. Its function is as follows. As part of the MCIA complex, required for efficient assembly of the mitochondrial complex I. The polypeptide is Transmembrane protein 186 (Homo sapiens (Human)).